The sequence spans 957 residues: Outer kinetochore KNL1 complex subunit knl-1 (957 aa).

Repeat unit 1 spans residues 87-90; that stretch reads MDIT. The 8 X 4 AA repeats of M-[D/E]-[I/L/M]-[S/T] stretch occupies residues 87–393; sequence MDITGLNSTP…NFDDVAMDIT (307 aa). The tract at residues 89 to 111 is disordered; it reads ITGLNSTPVTPKTQTPFNGSMDM. Residues 91–106 show a composition bias toward polar residues; that stretch reads GLNSTPVTPKTQTPFN. Repeat copies occupy residues 109–112, 206–209, 251–254, 282–285, 326–329, 367–370, and 390–393. Residues 476–504 are disordered; that stretch reads SLQQSSMRMSTTITEDVTASKNPESSTIS. A coiled-coil region spans residues 830–950; the sequence is KFAKESNVEI…RKKKEEMVER (121 aa).

In terms of assembly, component of the KNL1 complex composed of knl-1 and kbp-5. Part of the ten-subunit outer kinetochore KMN network that includes the KNL1, MIS12 and NDC80 complexes. Interacts with the protein phosphatase 1 (PP1) catalytic subunit gsp-1; the interaction is direct. Interacts with the protein phosphatase 1 (PP1) catalytic subunit gsp-2; the interaction is direct. Interacts with the MIS12 complex subunits kbp-1, kbp-2 and mis-12. Interacts with the NDC80 complex components ndc-80 and him-10. Interacts with knl-3. Interacts with kbp-3. Interacts with kbp-4. Interacts with kbp-5.

The protein resides in the cytoplasm. It localises to the cell cortex. Its subcellular location is the chromosome. It is found in the centromere. The protein localises to the kinetochore. Acts as a component of the outer kinetochore KNL1 complex that serves as a docking point for spindle assembly checkpoint components and mediates microtubule-kinetochore interactions. Kinetochores, consisting of a centromere-associated inner segment and a microtubule-contacting outer segment, play a crucial role in chromosome segregation by mediating the physical connection between centromeric DNA and spindle microtubules. The outer kinetochore is made up of the ten-subunit KMN network, comprising the MIS12, NDC80 and KNL1 complexes, and auxiliary microtubule-associated components; together they connect the outer kinetochore with the inner kinetochore, bind microtubules, and mediate interactions with mitotic checkpoint proteins that delay anaphase until chromosomes are bioriented on the spindle. Binds the protein phosphatase 1 catalytic subunits gsp-1 and gsp-2, which has a role in delaying formation of load-bearing kinetochore-microtubule attachments. Required for the recruitment of spindle-assembly checkpoint components bub-1 and mdf-1/2 to unattached kinetochores. Binds microtubules which plays a role in silencing of the spindle assembly checkpoint, but not the formation of load-bearing microtubule-kinetochore attachments. Has a role in the correct localization of the spindly-like protein spdl-1 and the RZZ complex that is composed of rod-1, czw-1 and zwl-1 to kinetochores. This chain is Outer kinetochore KNL1 complex subunit knl-1, found in Caenorhabditis briggsae.